The primary structure comprises 367 residues: Ferrochelatase (367 aa).

Fe cation contacts are provided by histidine 213 and glutamate 294.

Belongs to the ferrochelatase family.

The protein resides in the cytoplasm. The catalysed reaction is heme b + 2 H(+) = protoporphyrin IX + Fe(2+). It participates in porphyrin-containing compound metabolism; protoheme biosynthesis; protoheme from protoporphyrin-IX: step 1/1. Its function is as follows. Catalyzes the ferrous insertion into protoporphyrin IX. The chain is Ferrochelatase from Dechloromonas aromatica (strain RCB).